The primary structure comprises 321 residues: Lipoyl synthase (321 aa).

Residues cysteine 68, cysteine 73, cysteine 79, cysteine 94, cysteine 98, cysteine 101, and serine 308 each coordinate [4Fe-4S] cluster. The region spanning 80–297 (FNHGTATFMI…KAYADEIGFT (218 aa)) is the Radical SAM core domain.

This sequence belongs to the radical SAM superfamily. Lipoyl synthase family. The cofactor is [4Fe-4S] cluster.

The protein localises to the cytoplasm. The catalysed reaction is [[Fe-S] cluster scaffold protein carrying a second [4Fe-4S](2+) cluster] + N(6)-octanoyl-L-lysyl-[protein] + 2 oxidized [2Fe-2S]-[ferredoxin] + 2 S-adenosyl-L-methionine + 4 H(+) = [[Fe-S] cluster scaffold protein] + N(6)-[(R)-dihydrolipoyl]-L-lysyl-[protein] + 4 Fe(3+) + 2 hydrogen sulfide + 2 5'-deoxyadenosine + 2 L-methionine + 2 reduced [2Fe-2S]-[ferredoxin]. It participates in protein modification; protein lipoylation via endogenous pathway; protein N(6)-(lipoyl)lysine from octanoyl-[acyl-carrier-protein]: step 2/2. Catalyzes the radical-mediated insertion of two sulfur atoms into the C-6 and C-8 positions of the octanoyl moiety bound to the lipoyl domains of lipoate-dependent enzymes, thereby converting the octanoylated domains into lipoylated derivatives. The chain is Lipoyl synthase from Pseudoalteromonas translucida (strain TAC 125).